Consider the following 194-residue polypeptide: Probable thymidylate kinase (194 aa).

9–16 is an ATP binding site; sequence GIDGVGKS.

Belongs to the thymidylate kinase family.

It carries out the reaction dTMP + ATP = dTDP + ADP. In Methanopyrus kandleri (strain AV19 / DSM 6324 / JCM 9639 / NBRC 100938), this protein is Probable thymidylate kinase.